The sequence spans 124 residues: UPF0102 protein Meso_4010 (124 aa).

It belongs to the UPF0102 family.

The chain is UPF0102 protein Meso_4010 from Chelativorans sp. (strain BNC1).